A 218-amino-acid polypeptide reads, in one-letter code: Glutathione S-transferase Mu 1 (218 aa).

Positions 2 to 88 (PMTLGYWDVR…YLARKHGLCG (87 aa)) constitute a GST N-terminal domain. Glutathione-binding positions include 7–8 (YW), 46–50 (WLSEK), 59–60 (NL), and 72–73 (QS). In terms of domain architecture, GST C-terminal spans 90-208 (TEEERIRVDI…KSSRFIRVPV (119 aa)). Tyr-116 lines the substrate pocket.

This sequence belongs to the GST superfamily. Mu family. Homodimer. As to expression, well expressed in rabbit liver, brain and kidney.

It localises to the cytoplasm. The enzyme catalyses RX + glutathione = an S-substituted glutathione + a halide anion + H(+). Functionally, conjugation of reduced glutathione to a wide number of exogenous and endogenous hydrophobic electrophiles. The polypeptide is Glutathione S-transferase Mu 1 (Oryctolagus cuniculus (Rabbit)).